The following is a 291-amino-acid chain: Phosphoribosylaminoimidazole-succinocarboxamide synthase (291 aa).

The protein belongs to the SAICAR synthetase family.

It carries out the reaction 5-amino-1-(5-phospho-D-ribosyl)imidazole-4-carboxylate + L-aspartate + ATP = (2S)-2-[5-amino-1-(5-phospho-beta-D-ribosyl)imidazole-4-carboxamido]succinate + ADP + phosphate + 2 H(+). It participates in purine metabolism; IMP biosynthesis via de novo pathway; 5-amino-1-(5-phospho-D-ribosyl)imidazole-4-carboxamide from 5-amino-1-(5-phospho-D-ribosyl)imidazole-4-carboxylate: step 1/2. The sequence is that of Phosphoribosylaminoimidazole-succinocarboxamide synthase (ADE1) from Candida albicans (Yeast).